Consider the following 81-residue polypeptide: ATP synthase subunit c, chloroplastic (81 aa).

2 helical membrane passes run 3–23 (PLVF…ASIG) and 57–77 (LAFM…LLFA).

This sequence belongs to the ATPase C chain family. F-type ATPases have 2 components, F(1) - the catalytic core - and F(0) - the membrane proton channel. F(1) has five subunits: alpha(3), beta(3), gamma(1), delta(1), epsilon(1). F(0) has four main subunits: a(1), b(1), b'(1) and c(10-14). The alpha and beta chains form an alternating ring which encloses part of the gamma chain. F(1) is attached to F(0) by a central stalk formed by the gamma and epsilon chains, while a peripheral stalk is formed by the delta, b and b' chains.

The protein localises to the plastid. Its subcellular location is the chloroplast thylakoid membrane. F(1)F(0) ATP synthase produces ATP from ADP in the presence of a proton or sodium gradient. F-type ATPases consist of two structural domains, F(1) containing the extramembraneous catalytic core and F(0) containing the membrane proton channel, linked together by a central stalk and a peripheral stalk. During catalysis, ATP synthesis in the catalytic domain of F(1) is coupled via a rotary mechanism of the central stalk subunits to proton translocation. Its function is as follows. Key component of the F(0) channel; it plays a direct role in translocation across the membrane. A homomeric c-ring of between 10-14 subunits forms the central stalk rotor element with the F(1) delta and epsilon subunits. This is ATP synthase subunit c, chloroplastic from Atropa belladonna (Belladonna).